The chain runs to 1150 residues: PAN2-PAN3 deadenylation complex catalytic subunit PAN2 (1150 aa).

WD repeat units lie at residues Ala-26–Gln-67, Gly-114–Glu-156, Pro-158–Thr-194, and Gly-290–Val-328. Positions Ser-326–Ser-471 are linker. Residues Val-472 to Lys-862 form the USP domain. Positions Ala-911 to Ala-1079 constitute an Exonuclease domain. Residues Asp-913, Glu-915, Asp-1022, and Asp-1075 each coordinate a divalent metal cation. Positions Gly-1118–Ser-1150 are disordered.

Belongs to the peptidase C19 family. PAN2 subfamily. In terms of assembly, forms a heterotrimer with an asymmetric homodimer of the regulatory subunit PAN3 to form the poly(A)-nuclease (PAN) deadenylation complex. The cofactor is a divalent metal cation.

It localises to the cytoplasm. The catalysed reaction is Exonucleolytic cleavage of poly(A) to 5'-AMP.. Positively regulated by the regulatory subunit PAN3. Functionally, catalytic subunit of the poly(A)-nuclease (PAN) deadenylation complex, one of two cytoplasmic mRNA deadenylases involved in mRNA turnover. PAN specifically shortens poly(A) tails of RNA and the activity is stimulated by poly(A)-binding protein PAB1. PAN deadenylation is followed by rapid degradation of the shortened mRNA tails by the CCR4-NOT complex. Deadenylated mRNAs are then degraded by two alternative mechanisms, namely exosome-mediated 3'-5' exonucleolytic degradation, or deadenylation-dependent mRNA decaping and subsequent 5'-3' exonucleolytic degradation by XRN1. May also be involved in post-transcriptional maturation of mRNA poly(A) tails. The protein is PAN2-PAN3 deadenylation complex catalytic subunit PAN2 of Pyricularia oryzae (strain 70-15 / ATCC MYA-4617 / FGSC 8958) (Rice blast fungus).